Here is a 204-residue protein sequence, read N- to C-terminus: Outer-membrane lipoprotein carrier protein (204 aa).

The N-terminal stretch at 1–21 (MKKYLNLTALLLVGISNVTWA) is a signal peptide.

It belongs to the LolA family. Monomer.

The protein localises to the periplasm. Participates in the translocation of lipoproteins from the inner membrane to the outer membrane. Only forms a complex with a lipoprotein if the residue after the N-terminal Cys is not an aspartate (The Asp acts as a targeting signal to indicate that the lipoprotein should stay in the inner membrane). The chain is Outer-membrane lipoprotein carrier protein from Histophilus somni (strain 129Pt) (Haemophilus somnus).